A 1321-amino-acid polypeptide reads, in one-letter code: Serine/threonine-protein kinase SIK3 (1321 aa).

A disordered region spans residues 1 to 59 (MAAAAASGAGGAAGAGTGGAGPAGRLLPPPAPGSPAAPAAVSPAAGQPRPPAPASRGPM). Residues 8–22 (GAGGAAGAGTGGAGP) show a composition bias toward gly residues. Residues 36-47 (AAPAAVSPAAGQ) show a composition bias toward low complexity. One can recognise a Protein kinase domain in the interval 66-317 (YEIDRTIGKG…MEQICKHKWM (252 aa)). T71 bears the Phosphothreonine mark. Residues 72-80 (IGKGNFAVV) and K95 contribute to the ATP site. The residue at position 113 (E113) is a Phosphothreonine. The active-site Proton acceptor is the D188. Residue T221 is modified to Phosphothreonine; by LKB1. One can recognise a UBA domain in the interval 344–384 (PLNEDVLLAMEDMGLDKEQTLQSLRSDAYDHYSAIYSLLCD). At T469 the chain carries Phosphothreonine. S551, S591, and S592 each carry phosphoserine. The disordered stretch occupies residues 585-614 (TPVDEESSDGEPDQEAVQSSTYKDSNTLHL). Over residues 587 to 598 (VDEESSDGEPDQ) the composition is skewed to acidic residues. The span at 600–613 (AVQSSTYKDSNTLH) shows a compositional bias: polar residues. S626 and S647 each carry phosphoserine. The tract at residues 727 to 772 (IQPSSPPPNHPNNHLFRQPSNSPPPMSSAMIQPHGAASSSQFQGLP) is disordered. Residues 763–772 (ASSSQFQGLP) are compositionally biased toward polar residues. A Phosphoserine modification is found at S866. The tract at residues 894–945 (LFSDQSRGSPSSYSPSTGVGFSPTQALKVPPLDQFPTFPPSAHQQPPHYTTS) is disordered. The segment covering 896-909 (SDQSRGSPSSYSPS) has biased composition (low complexity). Over residues 935-945 (AHQQPPHYTTS) the composition is skewed to polar residues. Position 978 is a phosphoserine (S978). Position 986 is an omega-N-methylarginine (R986). Polar residues predominate over residues 1256 to 1265 (SLMGSQQFQD). A disordered region spans residues 1256–1289 (SLMGSQQFQDGENEECGASLGGHEHPDLSDGSQH).

This sequence belongs to the protein kinase superfamily. CAMK Ser/Thr protein kinase family. SNF1 subfamily. As to quaternary structure, binds to and is activated by YWHAZ when phosphorylated on Thr-221. Interacts with 14-3-3 proteins. Interacts with HDAC4; this interaction leads to HDAC4 retention in the cytoplasm. Interacts with DEPTOR, MLST8/GbetaL, RICTOR and RPTOR. The cofactor is Mg(2+). Post-translationally, phosphorylated at Thr-221 by STK11/LKB1 in complex with STE20-related adapter-alpha (STRADA) pseudo kinase and CAB39. Phosphorylation at Thr-221 is inhibited in response to PTHLH/PTHrP. Phosphorylated at Thr-469 and Ser-551 in response to cAMP signaling. Expressed in chondrocytes.

It localises to the cytoplasm. It catalyses the reaction L-seryl-[protein] + ATP = O-phospho-L-seryl-[protein] + ADP + H(+). It carries out the reaction L-threonyl-[protein] + ATP = O-phospho-L-threonyl-[protein] + ADP + H(+). Activated by phosphorylation on Thr-221. Functionally, positive regulator of mTOR signaling that functions by triggering the degradation of DEPTOR, an mTOR inhibitor. Involved in the dynamic regulation of mTOR signaling in chondrocyte differentiation during skeletogenesis. Negatively regulates cAMP signaling pathway possibly by acting on CRTC2/TORC2 and CRTC3/TORC3. Prevents HDAC4 translocation to the nucleus. The protein is Serine/threonine-protein kinase SIK3 of Homo sapiens (Human).